We begin with the raw amino-acid sequence, 576 residues long: Lipoprotein LpqB (576 aa).

An N-terminal signal peptide occupies residues 1–16 (MRRVTRTIAAAGAAIA). Residue cysteine 17 is the site of N-palmitoyl cysteine attachment. Residue cysteine 17 is the site of S-diacylglycerol cysteine attachment.

It belongs to the LpqB lipoprotein family.

Its subcellular location is the cell membrane. This Bifidobacterium longum (strain NCC 2705) protein is Lipoprotein LpqB.